Here is a 104-residue protein sequence, read N- to C-terminus: Large ribosomal subunit protein uL24 (104 aa).

This sequence belongs to the universal ribosomal protein uL24 family. As to quaternary structure, part of the 50S ribosomal subunit.

One of two assembly initiator proteins, it binds directly to the 5'-end of the 23S rRNA, where it nucleates assembly of the 50S subunit. In terms of biological role, one of the proteins that surrounds the polypeptide exit tunnel on the outside of the subunit. The sequence is that of Large ribosomal subunit protein uL24 from Brevibacillus brevis (strain 47 / JCM 6285 / NBRC 100599).